Consider the following 197-residue polypeptide: MIPIVVEESGRGERAFDIYSRLLRERIIFLGEPVTSDVANRIVAQLLFLEAEDPEKDIYLYINSPGGSVYDGLGIFDTMNHIRPDVSTVCVGLAASMGAFLLAAGAKGKRTSLAHSRIMIHQPLGGAQGQAKDIEIQANEILYIKQNLNEVLAERTGQPLSRIEDDTDRDFFMSASEAVEYGLIDRVIDRRALKATA.

The active-site Nucleophile is Ser96. His121 is a catalytic residue.

This sequence belongs to the peptidase S14 family. As to quaternary structure, fourteen ClpP subunits assemble into 2 heptameric rings which stack back to back to give a disk-like structure with a central cavity, resembling the structure of eukaryotic proteasomes.

The protein localises to the cytoplasm. The catalysed reaction is Hydrolysis of proteins to small peptides in the presence of ATP and magnesium. alpha-casein is the usual test substrate. In the absence of ATP, only oligopeptides shorter than five residues are hydrolyzed (such as succinyl-Leu-Tyr-|-NHMec, and Leu-Tyr-Leu-|-Tyr-Trp, in which cleavage of the -Tyr-|-Leu- and -Tyr-|-Trp bonds also occurs).. Cleaves peptides in various proteins in a process that requires ATP hydrolysis. Has a chymotrypsin-like activity. Plays a major role in the degradation of misfolded proteins. The sequence is that of ATP-dependent Clp protease proteolytic subunit 1 from Synechococcus sp. (strain ATCC 27144 / PCC 6301 / SAUG 1402/1) (Anacystis nidulans).